The following is a 275-amino-acid chain: MSAPLYVINVCDHETSAERVFGMLIERHNSFEDYPIDNDAFVNSLIVNGFRYTHVDDAVVCEYCGVVIKNWRENDVVEFVHATLSPYCVYANKIAQNEQFAEDISTDAVVVSPGKPRCVYNRLAHPSARRATFDHWPAALNALTHDIAEAGMFHTMLGDETACFFCDCRVRDWLPGDDPWQRHALANPQCYFVVCVKGDGFCNSERRAETAPGEPAPAFAGSEALECKVCLERQRDAVLLPCRHFCVCMQCYFALDGKCPTCRQDVADFIKIFVT.

BIR repeat units follow at residues 24-91 (LIER…CVYA) and 126-193 (PSAR…CYFV). Zn(2+) contacts are provided by Cys-163, Cys-166, His-183, and Cys-190. The RING-type zinc finger occupies 227 to 263 (CKVCLERQRDAVLLPCRHFCVCMQCYFALDGKCPTCR).

Acts by blocking cellular apoptosis rather than by preventing viral stimulation of apoptosis. The sequence is that of Apoptosis inhibitor 1 (IAP1) from Orgyia pseudotsugata (Douglas-fir tussock moth).